The chain runs to 282 residues: Putative peroxisomal biogenesis factor 19 (282 aa).

The disordered stretch occupies residues 73–95 (QEEAMKKAGADPSEGEGEQPLDP). Cys279 carries the post-translational modification Cysteine methyl ester. Cys279 carries S-farnesyl cysteine lipidation. Positions 280 to 282 (SIM) are cleaved as a propeptide — removed in mature form.

It belongs to the peroxin-19 family.

It is found in the peroxisome. This chain is Putative peroxisomal biogenesis factor 19 (prx-19), found in Caenorhabditis elegans.